A 318-amino-acid polypeptide reads, in one-letter code: Olfactory receptor 10H1 (318 aa).

Residues 1-25 (MQRANHSTVTQFILVGFSVFPHLQL) are Extracellular-facing. Asn5 carries N-linked (GlcNAc...) asparagine glycosylation. The helical transmembrane segment at 26-46 (MLFLLFLLMYLFTLLGNLLIM) threads the bilayer. At 47 to 54 (ATVWSERS) the chain is on the cytoplasmic side. Residues 55–75 (LHTPMYLFLCALSVSEILYTV) form a helical membrane-spanning segment. Topologically, residues 76–99 (AIIPRMLADLLSTQRSIAFLACAS) are extracellular. Cysteines 97 and 189 form a disulfide. A helical membrane pass occupies residues 100–120 (QMFFSFSFGFTHSFLLTVMGY). At 121 to 139 (DRYVAICHPLRYNVLMSPR) the chain is on the cytoplasmic side. Residues 140–160 (GCACLVGCSWAGGLVMGMVVT) traverse the membrane as a helical segment. The Extracellular segment spans residues 161 to 197 (SAIFHLAFCGHKEIHHFACHVPPLLKLACGDDVLVVA). The helical transmembrane segment at 198-218 (KGVGLVCITALLGCFLLILLS) threads the bilayer. Residues 219–238 (YAFIVAAILKIPSAEGRNKA) are Cytoplasmic-facing. The helical transmembrane segment at 239-259 (FSTCASHLTVVVVHYGFASVI) threads the bilayer. Topologically, residues 260–272 (YLKPKSPQSLEGD) are extracellular. Residues 273 to 293 (TLMGITYTVLTPFLSPIIFSL) traverse the membrane as a helical segment. Residues 294–318 (RNKELKVAMKKTFFSKLYPEKNVMM) are Cytoplasmic-facing.

Belongs to the G-protein coupled receptor 1 family.

It is found in the cell membrane. Functionally, odorant receptor. In Homo sapiens (Human), this protein is Olfactory receptor 10H1 (OR10H1).